The sequence spans 626 residues: Chaperone protein HtpG (626 aa).

The tract at residues 1 to 339 is a; substrate-binding; the sequence is MSTNQETRGF…SNDLPLNVSR (339 aa). Residues 340–555 form a b region; the sequence is EILQDNKVTA…NDQMTTQMAK (216 aa). Residues 556–626 form a c region; the sequence is LFAAAGQPVP…FIKRVNSLLS (71 aa).

The protein belongs to the heat shock protein 90 family. In terms of assembly, homodimer.

The protein localises to the cytoplasm. Functionally, molecular chaperone. Has ATPase activity. In Histophilus somni (strain 129Pt) (Haemophilus somnus), this protein is Chaperone protein HtpG.